Consider the following 494-residue polypeptide: Tripartite motif-containing protein 5 (494 aa).

Residue A2 is modified to N-acetylalanine. Residues 15-59 form an RING-type zinc finger; sequence CPICLELLTEPLSLDCGHSFCQACITANHKESTPHQGERSCPLCR. S86 is subject to Phosphoserine. The B box-type zinc finger occupies 91–132; that stretch reads QKVGHCARHGEKLLLFCEQDGNVICWLCERSQEHRGHHTLLV. Zn(2+) is bound by residues C96, H99, C118, and H124. Residues 131 to 223 adopt a coiled-coil conformation; sequence LVEEVAEKYQ…RLVQSESDMV (93 aa). Residues 186–199 are required for interaction with GABARAP and for autophagy; it reads FKQLRDILDCEESK. A B30.2/SPRY domain is found at 280–494; that stretch reads PDLKAMLQAF…LPMTLCSPSS (215 aa).

This sequence belongs to the TRIM/RBCC family. Can form homodimers and homotrimers. In addition to lower-order dimerization, also exhibits a higher-order multimerization and both low- and high-order multimerizations are essential for its restriction activity. Interacts with BTBD1 and BTBD2. Interacts with PSMC4, PSMC5, PSMD7 and HSPA8/HSC70. Interacts (via B30.2/SPRY domain) with HSPA1A/B. Interacts with PSMC2, MAP3K7/TAK1, TAB2 and TAB3. Interacts with SQSTM1. Interacts with TRIM6 and TRIM34. Interacts with ULK1 (phosphorylated form), GABARAP, GABARAPL1, GABARAPL2, MAP1LC3A, MAP1LC3C and BECN1. Post-translationally, degraded in a proteasome-independent fashion in the absence of viral infection but in a proteasome-dependent fashion following exposure to restriction sensitive virus. Autoubiquitinated in a RING finger- and UBE2D2-dependent manner. Monoubiquitinated by TRIM21. Deubiquitinated by Yersinia YopJ. Ubiquitination may not lead to proteasomal degradation.

The protein localises to the cytoplasm. Its subcellular location is the nucleus. The catalysed reaction is S-ubiquitinyl-[E2 ubiquitin-conjugating enzyme]-L-cysteine + [acceptor protein]-L-lysine = [E2 ubiquitin-conjugating enzyme]-L-cysteine + N(6)-ubiquitinyl-[acceptor protein]-L-lysine.. It functions in the pathway protein modification; protein ubiquitination. Its function is as follows. Capsid-specific restriction factor that prevents infection from non-host-adapted retroviruses. Blocks viral replication early in the life cycle, after viral entry but before reverse transcription. In addition to acting as a capsid-specific restriction factor, also acts as a pattern recognition receptor that activates innate immune signaling in response to the retroviral capsid lattice. Binding to the viral capsid triggers its E3 ubiquitin ligase activity, and in concert with the heterodimeric ubiquitin conjugating enzyme complex UBE2V1-UBE2N (also known as UBC13-UEV1A complex) generates 'Lys-63'-linked polyubiquitin chains, which in turn are catalysts in the autophosphorylation of the MAP3K7/TAK1 complex (includes TAK1, TAB2, and TAB3). Activation of the MAP3K7/TAK1 complex by autophosphorylation results in the induction and expression of NF-kappa-B and MAPK-responsive inflammatory genes, thereby leading to an innate immune response in the infected cell. Plays a role in regulating autophagy through activation of autophagy regulator BECN1 by causing its dissociation from its inhibitors BCL2 and TAB2. The chain is Tripartite motif-containing protein 5 (TRIM5) from Saguinus labiatus (Red-chested mustached tamarin).